The following is a 536-amino-acid chain: CTP synthase (536 aa).

The amidoligase domain stretch occupies residues 1–267; it reads MSKFVFVTGG…CKETLKYLEL (267 aa). Ser-13 serves as a coordination point for CTP. A UTP-binding site is contributed by Ser-13. Residues 14–19 and Asp-71 contribute to the ATP site; that span reads SIGKGI. Mg(2+)-binding residues include Asp-71 and Glu-141. Residues 148-150, 188-193, and Lys-224 each bind CTP; these read DIE and KTKPTQ. UTP contacts are provided by residues 188–193 and Lys-224; that span reads KTKPTQ. The 243-residue stretch at 292–534 folds into the Glutamine amidotransferase type-1 domain; sequence KVALVGKYIE…IKASQEKLTQ (243 aa). An L-glutamine-binding site is contributed by Gly-354. The Nucleophile; for glutamine hydrolysis role is filled by Cys-381. L-glutamine is bound by residues 382–385, Glu-405, and Arg-462; that span reads LGMQ. Active-site residues include His-507 and Glu-509.

Belongs to the CTP synthase family. In terms of assembly, homotetramer.

The enzyme catalyses UTP + L-glutamine + ATP + H2O = CTP + L-glutamate + ADP + phosphate + 2 H(+). It catalyses the reaction L-glutamine + H2O = L-glutamate + NH4(+). The catalysed reaction is UTP + NH4(+) + ATP = CTP + ADP + phosphate + 2 H(+). Its pathway is pyrimidine metabolism; CTP biosynthesis via de novo pathway; CTP from UDP: step 2/2. With respect to regulation, allosterically activated by GTP, when glutamine is the substrate; GTP has no effect on the reaction when ammonia is the substrate. The allosteric effector GTP functions by stabilizing the protein conformation that binds the tetrahedral intermediate(s) formed during glutamine hydrolysis. Inhibited by the product CTP, via allosteric rather than competitive inhibition. Its function is as follows. Catalyzes the ATP-dependent amination of UTP to CTP with either L-glutamine or ammonia as the source of nitrogen. Regulates intracellular CTP levels through interactions with the four ribonucleotide triphosphates. The polypeptide is CTP synthase (Prochlorococcus marinus (strain MIT 9215)).